The sequence spans 163 residues: Ribosome maturation factor RimP (163 aa).

Belongs to the RimP family.

Its subcellular location is the cytoplasm. In terms of biological role, required for maturation of 30S ribosomal subunits. The chain is Ribosome maturation factor RimP from Bordetella petrii (strain ATCC BAA-461 / DSM 12804 / CCUG 43448).